The following is an 80-amino-acid chain: UPF0057 membrane protein ZK632.10 (80 aa).

2 helical membrane-spanning segments follow: residues 4–24 (ILLA…DVGC) and 32–52 (ILLT…IILC).

It belongs to the UPF0057 (PMP3) family.

The protein localises to the membrane. The sequence is that of UPF0057 membrane protein ZK632.10 from Caenorhabditis elegans.